The chain runs to 194 residues: Peptidyl-tRNA hydrolase (194 aa).

Tyr17 is a tRNA binding site. His22 (proton acceptor) is an active-site residue. TRNA is bound by residues Tyr68, Asn70, and Asn116.

Belongs to the PTH family. In terms of assembly, monomer.

It localises to the cytoplasm. The catalysed reaction is an N-acyl-L-alpha-aminoacyl-tRNA + H2O = an N-acyl-L-amino acid + a tRNA + H(+). Its function is as follows. Hydrolyzes ribosome-free peptidyl-tRNAs (with 1 or more amino acids incorporated), which drop off the ribosome during protein synthesis, or as a result of ribosome stalling. Catalyzes the release of premature peptidyl moieties from peptidyl-tRNA molecules trapped in stalled 50S ribosomal subunits, and thus maintains levels of free tRNAs and 50S ribosomes. This is Peptidyl-tRNA hydrolase from Pseudomonas entomophila (strain L48).